A 228-amino-acid chain; its full sequence is Cytochrome c oxidase subunit 2 (228 aa).

The Mitochondrial intermembrane segment spans residues 1–14; sequence MAYPLQLGLQDASS. Residues 15–45 traverse the membrane as a helical segment; it reads PIMEELTNFHDHTLMIVFLISSLVLYLISLM. At 46 to 59 the chain is on the mitochondrial matrix side; it reads LTTKLIHTSTMDAQ. The chain crosses the membrane as a helical span at residues 60–87; that stretch reads EVETIWTILPAIILILIALPSLRILYMM. The Mitochondrial intermembrane segment spans residues 88-228; that stretch reads DEINNPVLTV…FENWSVSMTQ (141 aa). Positions 161, 196, 198, 200, 204, and 207 each coordinate Cu cation. E198 is a binding site for Mg(2+).

Belongs to the cytochrome c oxidase subunit 2 family. Component of the cytochrome c oxidase (complex IV, CIV), a multisubunit enzyme composed of 14 subunits. The complex is composed of a catalytic core of 3 subunits MT-CO1, MT-CO2 and MT-CO3, encoded in the mitochondrial DNA, and 11 supernumerary subunits COX4I, COX5A, COX5B, COX6A, COX6B, COX6C, COX7A, COX7B, COX7C, COX8 and NDUFA4, which are encoded in the nuclear genome. The complex exists as a monomer or a dimer and forms supercomplexes (SCs) in the inner mitochondrial membrane with NADH-ubiquinone oxidoreductase (complex I, CI) and ubiquinol-cytochrome c oxidoreductase (cytochrome b-c1 complex, complex III, CIII), resulting in different assemblies (supercomplex SCI(1)III(2)IV(1) and megacomplex MCI(2)III(2)IV(2)). Found in a complex with TMEM177, COA6, COX18, COX20, SCO1 and SCO2. Interacts with TMEM177 in a COX20-dependent manner. Interacts with COX20. Interacts with COX16. The cofactor is Cu cation.

The protein localises to the mitochondrion inner membrane. The enzyme catalyses 4 Fe(II)-[cytochrome c] + O2 + 8 H(+)(in) = 4 Fe(III)-[cytochrome c] + 2 H2O + 4 H(+)(out). Functionally, component of the cytochrome c oxidase, the last enzyme in the mitochondrial electron transport chain which drives oxidative phosphorylation. The respiratory chain contains 3 multisubunit complexes succinate dehydrogenase (complex II, CII), ubiquinol-cytochrome c oxidoreductase (cytochrome b-c1 complex, complex III, CIII) and cytochrome c oxidase (complex IV, CIV), that cooperate to transfer electrons derived from NADH and succinate to molecular oxygen, creating an electrochemical gradient over the inner membrane that drives transmembrane transport and the ATP synthase. Cytochrome c oxidase is the component of the respiratory chain that catalyzes the reduction of oxygen to water. Electrons originating from reduced cytochrome c in the intermembrane space (IMS) are transferred via the dinuclear copper A center (CU(A)) of subunit 2 and heme A of subunit 1 to the active site in subunit 1, a binuclear center (BNC) formed by heme A3 and copper B (CU(B)). The BNC reduces molecular oxygen to 2 water molecules using 4 electrons from cytochrome c in the IMS and 4 protons from the mitochondrial matrix. This is Cytochrome c oxidase subunit 2 (MT-CO2) from Meriones shawi (Shaw's jird).